A 997-amino-acid polypeptide reads, in one-letter code: Glutamate [NMDA] receptor subunit 1 (997 aa).

Positions 1–26 (MAMAEFVFCRPLFGLAIVLLVAPIDA) are cleaved as a signal peptide. The Extracellular portion of the chain corresponds to 27 to 573 (AQRHTASDNP…TLVSFLQPFS (547 aa)). N-linked (GlcNAc...) asparagine glycosylation is found at Asn258, Asn314, Asn345, Asn397, Asn454, Asn481, and Asn501. Residues 530-532 (PLT) and Arg537 contribute to the glycine site. The chain crosses the membrane as a helical span at residues 574–594 (NTLWILVMVSVHVVALVLYLL). Residues 595 to 651 (DRFSPFGRFKLSHSDSNEEKALNLSSAVWFAWGVLLNSGIGEGTPRSFSARVLGMVW) lie on the Cytoplasmic side of the membrane. A helical transmembrane segment spans residues 652 to 672 (AGFAMIIVASYTANLAAFLVL). The Extracellular segment spans residues 673–831 (ERPKTKLSGI…KTPNTLGLKN (159 aa)). N-linked (GlcNAc...) asparagine glycosylation is present at Asn693. Ser703 and Asp747 together coordinate glycine. A helical membrane pass occupies residues 832 to 852 (MAGVFILVGVGIAGGVGLIII). The Cytoplasmic portion of the chain corresponds to 853 to 997 (EVIYKKHQVK…YTSDVSHLVV (145 aa)). The disordered stretch occupies residues 970 to 997 (LGKTRPQQSVLPPRYSPGYTSDVSHLVV). The segment covering 987-997 (GYTSDVSHLVV) has biased composition (polar residues).

It belongs to the glutamate-gated ion channel (TC 1.A.10.1) family. Forms a heteromeric NMDA channel with Nmdar2. Highly expressed in adult heads: in the brain and ring gland. Low expression throughout the entire brain is also seen. Higher expression levels were observed in some scattered cell bodies and part of their fibers, including those from several pairs of DPM (dorsal-posterior-medial) neurons surrounding the calyx, DAL (dorsal-anterior-lateral) and DPL (dorsal-posterior-lateral) neurons in the lateral protocerebrum (LP), VAL (ventral-anterior-lateral) neurons in the anterior protocerebrum, and two pairs of VP (ventral-posterior) neurons in the posterior protocerebrum. Many cell bodies in the optic lobes show preferential expression. Punctuate expression is notably detected in many brain regions including the superior medial protocerebrum. Weakly expressed in the antennal lobes and central complex.

It localises to the cell membrane. The protein localises to the postsynaptic cell membrane. Its subcellular location is the postsynaptic density. Its function is as follows. NMDA receptor subtype of glutamate-gated ion channels with high calcium permeability and voltage-dependent sensitivity to magnesium. Mediated by glycine. This protein plays a key role in synaptic plasticity, synaptogenesis, excitotoxicity, memory acquisition and learning. It mediates neuronal functions in glutamate neurotransmission. Is involved in the cell surface targeting of NMDA receptors. Plays a role in associative learning and in long-term memory consolidation. In Drosophila melanogaster (Fruit fly), this protein is Glutamate [NMDA] receptor subunit 1.